The primary structure comprises 352 residues: Light dependent period A (352 aa).

4Fe-4S ferredoxin-type domains lie at 88 to 119 (RRAW…STGV) and 121 to 144 (RDRC…AQAW). [4Fe-4S] cluster contacts are provided by Cys97, Cys101, Cys105, Cys109, Cys124, Cys127, Cys130, and Cys134.

Interacts with KaiA, CikA and SasA; the complexes do not follow circadian rhythms. The cofactor is [4Fe-4S] cluster.

Functions in an input pathway to the Kai circadian clock. Probably senses the metabolic state of the cell via plastoquinone levels and informs the clock to modulate the photoperiod length. Deletion decreases the ability of the bacteria to modulate the circadian period in response to altered light regimes. Mild overexpression increases the photoperiod. Rapidly degraded in the presence of the quinone analog DBMIB (2,5-dibromo-3-methyl-6-isopropyl-p-benzoquinone), an artifical electron acceptor for photosystem II that reduces the plastoquinone pool. Partially resonsible for sensitivity of CikA to DBMIB, influences the levels of KaiA. This is Light dependent period A from Synechococcus elongatus (strain ATCC 33912 / PCC 7942 / FACHB-805) (Anacystis nidulans R2).